The sequence spans 1317 residues: Putative late blight resistance protein homolog R1B-14 (1317 aa).

Coiled coils occupy residues 419–442 and 535–556; these read RYSDSLAFLKNQLQVIQTEFESLQ and RMNEEIVGFKDVIENLRNRLLN. The 303-residue stretch at 521–823 folds into the NB-ARC domain; sequence TVITHTSSQL…SESFIKSSEG (303 aa). 568 to 575 serves as a coordination point for ATP; sequence GMPGLGKT. LRR repeat units lie at residues 944–968, 987–1015, 1090–1114, 1138–1161, 1164–1186, and 1187–1211; these read FKFLKVLDLEHQVVIDFIPTELFYL, LWNLETLILKSTPVGRHNTLLLPSTIWDM, PIRLEILKLYRSKAFKTIPFCISAP, LKHLEVLKLCDLEFGDHREWKVSN, FPQLKILKLEYLSLMKWIVADDA, and FPNLEQLVLHGCQDLMEIPSCFMDI. The HMA domain maps to 1251-1317; it reads IKKMVLKFDI…VSKLRKRGML (67 aa).

Belongs to the disease resistance NB-LRR family.

It localises to the cytoplasm. Its subcellular location is the membrane. Confers resistance to late blight (Phytophthora infestans) races carrying the avirulence gene Avr1. Resistance proteins guard the plant against pathogens that contain an appropriate avirulence protein via an indirect interaction with this avirulence protein. That triggers a defense system including the hypersensitive response, which restricts the pathogen growth. The chain is Putative late blight resistance protein homolog R1B-14 (R1B-14) from Solanum demissum (Wild potato).